A 331-amino-acid chain; its full sequence is Ketol-acid reductoisomerase (NADP(+)) (331 aa).

Residues A2 to T182 enclose the KARI N-terminal Rossmann domain. Residues Y25–Q28, S51, S53, and D83–Q86 contribute to the NADP(+) site. H108 is a catalytic residue. NADP(+) is bound at residue G134. The KARI C-terminal knotted domain maps to N183–L328. Residues D191, E195, E227, and E231 each coordinate Mg(2+). S252 contributes to the substrate binding site.

This sequence belongs to the ketol-acid reductoisomerase family. Requires Mg(2+) as cofactor.

It catalyses the reaction (2R)-2,3-dihydroxy-3-methylbutanoate + NADP(+) = (2S)-2-acetolactate + NADPH + H(+). The enzyme catalyses (2R,3R)-2,3-dihydroxy-3-methylpentanoate + NADP(+) = (S)-2-ethyl-2-hydroxy-3-oxobutanoate + NADPH + H(+). It functions in the pathway amino-acid biosynthesis; L-isoleucine biosynthesis; L-isoleucine from 2-oxobutanoate: step 2/4. Its pathway is amino-acid biosynthesis; L-valine biosynthesis; L-valine from pyruvate: step 2/4. Functionally, involved in the biosynthesis of branched-chain amino acids (BCAA). Catalyzes an alkyl-migration followed by a ketol-acid reduction of (S)-2-acetolactate (S2AL) to yield (R)-2,3-dihydroxy-isovalerate. In the isomerase reaction, S2AL is rearranged via a Mg-dependent methyl migration to produce 3-hydroxy-3-methyl-2-ketobutyrate (HMKB). In the reductase reaction, this 2-ketoacid undergoes a metal-dependent reduction by NADPH to yield (R)-2,3-dihydroxy-isovalerate. In Synechococcus sp. (strain CC9605), this protein is Ketol-acid reductoisomerase (NADP(+)).